Consider the following 40-residue polypeptide: Photosystem II reaction center protein Y (40 aa).

Residues 5–23 traverse the membrane as a helical segment; that stretch reads LIVVLAPILLAGGWAVFNI.

Belongs to the PsbY family. As to quaternary structure, PSII is composed of 1 copy each of membrane proteins PsbA, PsbB, PsbC, PsbD, PsbE, PsbF, PsbH, PsbI, PsbJ, PsbK, PsbL, PsbM, PsbT, PsbX, PsbY, PsbZ, Psb30/Ycf12, peripheral proteins PsbO, CyanoQ (PsbQ), PsbU, PsbV and a large number of cofactors. It forms dimeric complexes.

The protein localises to the cellular thylakoid membrane. Its function is as follows. Loosely associated component of the core of photosystem II (PSII), it is not always seen in crystals. PSII is a light-driven water plastoquinone oxidoreductase, using light energy to abstract electrons from H(2)O, generating a proton gradient subsequently used for ATP formation. The protein is Photosystem II reaction center protein Y of Synechococcus elongatus (strain ATCC 33912 / PCC 7942 / FACHB-805) (Anacystis nidulans R2).